The chain runs to 196 residues: dTTP/UTP pyrophosphatase (196 aa).

Aspartate 72 serves as the catalytic Proton acceptor.

This sequence belongs to the Maf family. YhdE subfamily. A divalent metal cation is required as a cofactor.

It is found in the cytoplasm. It catalyses the reaction dTTP + H2O = dTMP + diphosphate + H(+). The enzyme catalyses UTP + H2O = UMP + diphosphate + H(+). Functionally, nucleoside triphosphate pyrophosphatase that hydrolyzes dTTP and UTP. May have a dual role in cell division arrest and in preventing the incorporation of modified nucleotides into cellular nucleic acids. This Chlamydia trachomatis serovar A (strain ATCC VR-571B / DSM 19440 / HAR-13) protein is dTTP/UTP pyrophosphatase.